Reading from the N-terminus, the 481-residue chain is Sulfate adenylyltransferase subunit 1 (481 aa).

Positions 22-236 constitute a tr-type G domain; sequence KDLLRFITCG…LLDSIRLDAD (215 aa). The G1 stretch occupies residues 31–38; sequence GSVDDGKS. Position 31–38 (31–38) interacts with GTP; sequence GSVDDGKS. The tract at residues 89–93 is G2; that stretch reads GITID. Residues 110–113 are G3; it reads DCPG. GTP is bound by residues 110–114 and 165–168; these read DCPGH and NKMD. A G4 region spans residues 165 to 168; the sequence is NKMD. Residues 202–204 form a G5 region; sequence SAL.

The protein belongs to the TRAFAC class translation factor GTPase superfamily. Classic translation factor GTPase family. CysN/NodQ subfamily. In terms of assembly, heterodimer composed of CysD, the smaller subunit, and CysN.

It catalyses the reaction sulfate + ATP + H(+) = adenosine 5'-phosphosulfate + diphosphate. It functions in the pathway sulfur metabolism; hydrogen sulfide biosynthesis; sulfite from sulfate: step 1/3. Functionally, with CysD forms the ATP sulfurylase (ATPS) that catalyzes the adenylation of sulfate producing adenosine 5'-phosphosulfate (APS) and diphosphate, the first enzymatic step in sulfur assimilation pathway. APS synthesis involves the formation of a high-energy phosphoric-sulfuric acid anhydride bond driven by GTP hydrolysis by CysN coupled to ATP hydrolysis by CysD. The polypeptide is Sulfate adenylyltransferase subunit 1 (Laribacter hongkongensis (strain HLHK9)).